A 268-amino-acid polypeptide reads, in one-letter code: Testis-specific serine/threonine-protein kinase 3 (268 aa).

Residues 10-265 (YQLGKTIGEG…IEEVSWHPWL (256 aa)) form the Protein kinase domain. Residues 16-24 (IGEGTYSKV) and Lys39 contribute to the ATP site. Asp134 acts as the Proton acceptor in catalysis. Ser166 is modified (phosphoserine). At Thr168 the chain carries Phosphothreonine.

The protein belongs to the protein kinase superfamily. CAMK Ser/Thr protein kinase family. Mg(2+) serves as cofactor. The cofactor is Mn(2+). In terms of processing, autophosphorylated at Ser-166. Phosphorylation at Thr-168 by PDPK1 activates the serine/threonine protein kinase activity.

It localises to the cell projection. It is found in the cilium. The protein localises to the flagellum. It carries out the reaction L-seryl-[protein] + ATP = O-phospho-L-seryl-[protein] + ADP + H(+). The catalysed reaction is L-threonyl-[protein] + ATP = O-phospho-L-threonyl-[protein] + ADP + H(+). Activated by phosphorylation on Thr-168 by PDPK1. Serine/threonine protein kinase required for spermatid development and male fertility. The protein is Testis-specific serine/threonine-protein kinase 3 of Homo sapiens (Human).